We begin with the raw amino-acid sequence, 286 residues long: Shikimate dehydrogenase (NADP(+)) (286 aa).

Residues 19-21 and Thr-66 contribute to the shikimate site; that span reads SVS. Lys-70 acts as the Proton acceptor in catalysis. Asn-91 and Asp-106 together coordinate shikimate. Residues 130-134 and Ala-225 contribute to the NADP(+) site; that span reads GAGGS. A shikimate-binding site is contributed by Tyr-227. Gly-248 provides a ligand contact to NADP(+).

This sequence belongs to the shikimate dehydrogenase family. Homodimer.

It catalyses the reaction shikimate + NADP(+) = 3-dehydroshikimate + NADPH + H(+). Its pathway is metabolic intermediate biosynthesis; chorismate biosynthesis; chorismate from D-erythrose 4-phosphate and phosphoenolpyruvate: step 4/7. Its function is as follows. Involved in the biosynthesis of the chorismate, which leads to the biosynthesis of aromatic amino acids. Catalyzes the reversible NADPH linked reduction of 3-dehydroshikimate (DHSA) to yield shikimate (SA). This chain is Shikimate dehydrogenase (NADP(+)), found in Dehalococcoides mccartyi (strain ATCC BAA-2266 / KCTC 15142 / 195) (Dehalococcoides ethenogenes (strain 195)).